The following is a 477-amino-acid chain: Delayed-rectifier potassium channel regulatory subunit KCNS2 (477 aa).

The Cytoplasmic portion of the chain corresponds to 1–184 (MTGQSLWDVS…LALDNPGYSV (184 aa)). The chain crosses the membrane as a helical span at residues 185-206 (LSRVFSILSILVVMGSIITMCL). The Extracellular portion of the chain corresponds to 207 to 225 (NSLPDFQIPDSQGNPGEDP). The helical transmembrane segment at 226 to 248 (RFEIVEHFGIAWFTFELVARFAV) threads the bilayer. The Cytoplasmic segment spans residues 249 to 259 (APDFLKFFKNA). A helical membrane pass occupies residues 260-280 (LNLIDLMSIVPFYITLVVNLV). Topologically, residues 281–290 (VESTPTLANL) are extracellular. A helical; Voltage-sensor membrane pass occupies residues 291-311 (GRVAQVLRLMRIFRILKLARH). Residues 312 to 326 (STGLRSLGATLKYSY) lie on the Cytoplasmic side of the membrane. Residues 327 to 348 (KEVGLLLLYLSVGISIFSVVAY) traverse the membrane as a helical segment. Over 349–361 (TIEKEENEGLATI) the chain is Extracellular. The helical intramembrane region spans 362 to 373 (PACWWWATVSMT). The short motif at 374-379 (TVGYGD) is the Selectivity filter element. An intramembrane segment occupies 374-381 (TVGYGDVV). Residues 382–388 (PGTTAGK) lie on the Extracellular side of the membrane. The chain crosses the membrane as a helical span at residues 389-417 (LTASACILAGILVVVLPITLIFNKFSHFY). Residues 418-477 (RRQKQLESAMRSCDFGDGMKEVPSVNLRDYYAHKVKSLMASLTNMSRSSPSELSLNDSLR) are Cytoplasmic-facing.

This sequence belongs to the potassium channel family. S (TC 1.A.1.2) subfamily. Kv9.2/KCNS2 sub-subfamily. In terms of assembly, heterotetramer with KCNB1 and KCNB2. Does not form homomultimers.

It is found in the cell membrane. Potassium channel regulatory subunit that modulate the delayed rectifier voltage-gated potassium channel activity of KCNB1 and KCNB2 by altering their kinetics, expression levels, and shifting the half-inactivation potential to more polarized values. While it does not form functional channels on its own, it can form functional heterotetrameric channels with KCNB1 and KCNB2. Each regulatory subunit has unique regulatory properties that can lead to extensive inhibition, significant changes in kinetics, and/or substantial shifts in the voltage dependencies of the inactivation process. This is Delayed-rectifier potassium channel regulatory subunit KCNS2 from Homo sapiens (Human).